We begin with the raw amino-acid sequence, 101 residues long: Small ribosomal subunit protein uS14 (101 aa).

It belongs to the universal ribosomal protein uS14 family. As to quaternary structure, part of the 30S ribosomal subunit. Contacts proteins S3 and S10.

Binds 16S rRNA, required for the assembly of 30S particles and may also be responsible for determining the conformation of the 16S rRNA at the A site. The chain is Small ribosomal subunit protein uS14 from Dinoroseobacter shibae (strain DSM 16493 / NCIMB 14021 / DFL 12).